A 303-amino-acid chain; its full sequence is uncharacterized protein (303 aa).

Ser63 bears the Phosphoserine mark.

The protein belongs to the HAD-like hydrolase superfamily.

The protein localises to the cytoplasm. It is found in the nucleus. This is an uncharacterized protein from Schizosaccharomyces pombe (strain 972 / ATCC 24843) (Fission yeast).